Consider the following 310-residue polypeptide: tRNA dimethylallyltransferase (310 aa).

Position 13 to 20 (13 to 20 (GPTASGKT)) interacts with ATP. Substrate is bound at residue 15–20 (TASGKT). Interaction with substrate tRNA stretches follow at residues 38–41 (DSAL), 162–166 (QRLSR), 243–248 (RCVGYR), and 276–283 (KRQITWLR).

It belongs to the IPP transferase family. As to quaternary structure, monomer. Mg(2+) serves as cofactor.

The catalysed reaction is adenosine(37) in tRNA + dimethylallyl diphosphate = N(6)-dimethylallyladenosine(37) in tRNA + diphosphate. Catalyzes the transfer of a dimethylallyl group onto the adenine at position 37 in tRNAs that read codons beginning with uridine, leading to the formation of N6-(dimethylallyl)adenosine (i(6)A). The sequence is that of tRNA dimethylallyltransferase from Vibrio parahaemolyticus serotype O3:K6 (strain RIMD 2210633).